Consider the following 208-residue polypeptide: Thymidylate kinase (208 aa).

10–17 (GLEGAGKT) is a binding site for ATP.

This sequence belongs to the thymidylate kinase family.

It carries out the reaction dTMP + ATP = dTDP + ADP. In terms of biological role, phosphorylation of dTMP to form dTDP in both de novo and salvage pathways of dTTP synthesis. This Actinobacillus pleuropneumoniae serotype 5b (strain L20) protein is Thymidylate kinase.